Here is a 348-residue protein sequence, read N- to C-terminus: Protein RecA (348 aa).

66-73 (GPESSGKT) is a binding site for ATP.

It belongs to the RecA family.

The protein resides in the cytoplasm. Can catalyze the hydrolysis of ATP in the presence of single-stranded DNA, the ATP-dependent uptake of single-stranded DNA by duplex DNA, and the ATP-dependent hybridization of homologous single-stranded DNAs. It interacts with LexA causing its activation and leading to its autocatalytic cleavage. The chain is Protein RecA from Legionella pneumophila (strain Lens).